Here is a 279-residue protein sequence, read N- to C-terminus: Zinc finger CCCH domain-containing protein 1 (279 aa).

The segment at 20-45 (DVIVLSPGPPARRRPPPVKAVEPESG) is disordered. C3H1-type zinc fingers lie at residues 56–84 (FYKT…HGDE) and 139–167 (RAIT…HVSA).

The sequence is that of Zinc finger CCCH domain-containing protein 1 from Oryza sativa subsp. japonica (Rice).